We begin with the raw amino-acid sequence, 304 residues long: Caspase-6 (304 aa).

The interval 1-29 (MSGAERRPAAGRVQLDSKPTPTTTADGNQ) is disordered. Residues 1 to 35 (MSGAERRPAAGRVQLDSKPTPTTTADGNQNITEVD) constitute a propeptide that is removed on maturation. Over residues 17 to 29 (SKPTPTTTADGNQ) the composition is skewed to polar residues. Residues 54–56 (QRR) form a tri-arginine exosite region. His-133 is a catalytic residue. The interval 137–154 (DHVYAYDAQIKIETITNM) is 130's region. The active site involves Cys-175. Positions 192 to 204 (SKDETTVNQTEVD) are excised as a propeptide.

It belongs to the peptidase C14A family. Heterotetramer that consists of two anti-parallel arranged heterodimers, each one formed by a 18 kDa (p18) and a 11 kDa (p11) subunit. As to quaternary structure, heterotetramer that consists of two anti-parallel arranged heterodimers, each one formed by a 18 kDa (Caspase-6 subunit p18) and a 11 kDa (Caspase-6 subunit p11) subunit. In terms of tissue distribution, widely expressed.

Its subcellular location is the cytoplasm. The protein localises to the nucleus. It carries out the reaction Strict requirement for Asp at position P1 and has a preferred cleavage sequence of Val-Glu-His-Asp-|-.. Its activity is regulated as follows. During activation, the N-terminal prodomain is removed by cleavage. Concomitantly, double cleavage gives rise to a large 18-kDa and a small 11-kDa subunit. The two large and two small subunits then assemble to form the active CASP6 complex. Intramolecular cleavage at Asp-191 is a prerequisite for CASP6 self-activation. In terms of biological role, cysteine protease that plays essential roles in programmed cell death, development and innate immunity. Acts as a non-canonical executioner caspase during apoptosis: localizes in the nucleus and cleaves the nuclear structural protein lamin-A/LMNA thereby inducing nuclear shrinkage and fragmentation. Lamin-A/LMNA cleavage is required for chromatin condensation and nuclear disassembly during apoptotic execution. Plays an essential role in defense against viruses by acting as a central mediator of the ZBP1-mediated pyroptosis, apoptosis, and necroptosis (PANoptosis), independently of its cysteine protease activity. PANoptosis is a unique inflammatory programmed cell death, which provides a molecular scaffold that allows the interactions and activation of machinery required for inflammasome/pyroptosis, apoptosis and necroptosis. This is Caspase-6 from Gallus gallus (Chicken).